An 83-amino-acid polypeptide reads, in one-letter code: Kunitz-type serine protease inhibitor textilinin-3 (83 aa).

Positions 1-24 (MSSGGLLLLLGLLTLWEVLTPVSS) are cleaved as a signal peptide. The region spanning 31–81 (CKLPAETGRCNAKIPRFYYNPRQHQCIEFLYGGCGGNANNFKTIKECESTC) is the BPTI/Kunitz inhibitor domain. Cystine bridges form between Cys31–Cys81, Cys40–Cys64, and Cys56–Cys77.

It belongs to the venom Kunitz-type family. In terms of tissue distribution, expressed by the venom gland.

It localises to the secreted. In terms of biological role, serine protease inhibitor. Does not inhibit plasmin, and does not reduce blood loss in the mouse tail vein blood loss model. In Pseudonaja textilis textilis (Eastern brown snake), this protein is Kunitz-type serine protease inhibitor textilinin-3.